Reading from the N-terminus, the 188-residue chain is RWD domain-containing protein 4 (188 aa).

Residues M9–F111 enclose the RWD domain. The disordered stretch occupies residues T132–P167. Over residues K155–L166 the composition is skewed to basic and acidic residues.

The chain is RWD domain-containing protein 4 (Rwdd4) from Mus musculus (Mouse).